The chain runs to 173 residues: SPbeta prophage-derived putative HNH homing endonuclease YosQ (173 aa).

Functionally, a possible homing endonuclease, it is entirely encoded within the YosP intron. The polypeptide is SPbeta prophage-derived putative HNH homing endonuclease YosQ (yosQ) (Bacillus subtilis (strain 168)).